The primary structure comprises 380 residues: Chorismate synthase (380 aa).

Position 47 (Arg47) interacts with NADP(+). FMN is bound by residues 124–126 (RSS), Gly288, 303–307 (KPTST), and Arg329.

The protein belongs to the chorismate synthase family. As to quaternary structure, homotetramer. Requires FMNH2 as cofactor.

The catalysed reaction is 5-O-(1-carboxyvinyl)-3-phosphoshikimate = chorismate + phosphate. Its pathway is metabolic intermediate biosynthesis; chorismate biosynthesis; chorismate from D-erythrose 4-phosphate and phosphoenolpyruvate: step 7/7. Its function is as follows. Catalyzes the anti-1,4-elimination of the C-3 phosphate and the C-6 proR hydrogen from 5-enolpyruvylshikimate-3-phosphate (EPSP) to yield chorismate, which is the branch point compound that serves as the starting substrate for the three terminal pathways of aromatic amino acid biosynthesis. This reaction introduces a second double bond into the aromatic ring system. The chain is Chorismate synthase from Leptospira interrogans serogroup Icterohaemorrhagiae serovar copenhageni (strain Fiocruz L1-130).